Here is a 148-residue protein sequence, read N- to C-terminus: Deoxyuridine 5'-triphosphate nucleotidohydrolase (148 aa).

Substrate contacts are provided by residues 68-70 (RSG), Asn81, 85-87 (TID), and Lys95.

It belongs to the dUTPase family. Mg(2+) serves as cofactor.

It carries out the reaction dUTP + H2O = dUMP + diphosphate + H(+). The protein operates within pyrimidine metabolism; dUMP biosynthesis; dUMP from dCTP (dUTP route): step 2/2. Functionally, this enzyme is involved in nucleotide metabolism: it produces dUMP, the immediate precursor of thymidine nucleotides and it decreases the intracellular concentration of dUTP so that uracil cannot be incorporated into DNA. The sequence is that of Deoxyuridine 5'-triphosphate nucleotidohydrolase from Rickettsia massiliae (strain Mtu5).